The chain runs to 732 residues: Putative pectinesterase/pectinesterase inhibitor 28 (732 aa).

The chain crosses the membrane as a helical span at residues 17–37 (VIISISSVLLISMVVAVTIGV). N-linked (GlcNAc...) asparagine glycans are attached at residues N40, N93, N278, and N297. The pectinesterase inhibitor 28 stretch occupies residues 51–204 (TTSVKAIKDV…VQLTHNGLAM (154 aa)). The segment at 252–548 (DIVVAQDGSG…FTPAQYIQGD (297 aa)) is pectinesterase 28. T327 and Q357 together coordinate substrate. The Proton donor; for pectinesterase activity role is filled by D380. Cysteines 394 and 414 form a disulfide. D401 functions as the Nucleophile; for pectinesterase activity in the catalytic mechanism. The N-linked (GlcNAc...) asparagine glycan is linked to N413. Substrate-binding residues include R469 and W471. 3 N-linked (GlcNAc...) asparagine glycosylation sites follow: N566, N570, and N581. Composition is skewed to low complexity over residues 570–620 (NSTV…PSTS) and 633–732 (PSMV…SSIG). Residues 570–732 (NSTVTGSSLS…PSASPQSSIG (163 aa)) form a disordered region.

The protein in the N-terminal section; belongs to the PMEI family. In the C-terminal section; belongs to the pectinesterase family. As to expression, expressed in flower buds.

It is found in the membrane. It catalyses the reaction [(1-&gt;4)-alpha-D-galacturonosyl methyl ester](n) + n H2O = [(1-&gt;4)-alpha-D-galacturonosyl](n) + n methanol + n H(+). Its pathway is glycan metabolism; pectin degradation; 2-dehydro-3-deoxy-D-gluconate from pectin: step 1/5. Its function is as follows. Acts in the modification of cell walls via demethylesterification of cell wall pectin. The sequence is that of Putative pectinesterase/pectinesterase inhibitor 28 (PME28) from Arabidopsis thaliana (Mouse-ear cress).